The following is an 829-amino-acid chain: Periplasmic nitrate reductase (829 aa).

The tat-type signal signal peptide spans 1 to 29; that stretch reads MKMTRRAFVKANAAASAAAVAGVTLPASA. The 4Fe-4S Mo/W bis-MGD-type domain maps to 41 to 97; it reads IKWDKAPCRFCGTGCSVLVGTQNGRVVATQGDPEAPVNKGLNCIKGYFLSKIMYGKD. Residues cysteine 48, cysteine 51, cysteine 55, and cysteine 83 each coordinate [4Fe-4S] cluster. Mo-bis(molybdopterin guanine dinucleotide)-binding positions include lysine 85, glutamine 152, asparagine 177, cysteine 181, 214–221, 245–249, 264–266, methionine 374, glutamine 378, asparagine 484, 510–511, lysine 533, aspartate 560, and 718–727; these read WGSNMAEM, STYYH, QSD, SD, and TGRVLEHWHT. Substrate is bound at residue phenylalanine 794. Positions 802 and 819 each coordinate Mo-bis(molybdopterin guanine dinucleotide).

Belongs to the prokaryotic molybdopterin-containing oxidoreductase family. NasA/NapA/NarB subfamily. Component of the periplasmic nitrate reductase NapAB complex composed of NapA and NapB. It depends on [4Fe-4S] cluster as a cofactor. Mo-bis(molybdopterin guanine dinucleotide) is required as a cofactor. Post-translationally, predicted to be exported by the Tat system. The position of the signal peptide cleavage has not been experimentally proven.

The protein resides in the periplasm. The catalysed reaction is 2 Fe(II)-[cytochrome] + nitrate + 2 H(+) = 2 Fe(III)-[cytochrome] + nitrite + H2O. In terms of biological role, catalytic subunit of the periplasmic nitrate reductase complex NapAB. Receives electrons from NapB and catalyzes the reduction of nitrate to nitrite. The protein is Periplasmic nitrate reductase of Aliivibrio fischeri (strain ATCC 700601 / ES114) (Vibrio fischeri).